We begin with the raw amino-acid sequence, 635 residues long: Replication factor C small subunit (635 aa).

51–58 is a binding site for ATP; that stretch reads GPPGTGKT.

This sequence belongs to the activator 1 small subunits family. RfcS subfamily. As to quaternary structure, heteromultimer composed of small subunits (RfcS) and large subunits (RfcL). This protein undergoes a protein self splicing that involves a post-translational excision of the intervening region (intein) followed by peptide ligation.

In terms of biological role, part of the RFC clamp loader complex which loads the PCNA sliding clamp onto DNA. The sequence is that of Replication factor C small subunit (rfcS) from Methanopyrus kandleri (strain AV19 / DSM 6324 / JCM 9639 / NBRC 100938).